The primary structure comprises 1051 residues: Protein ALWAYS EARLY 2 (1051 aa).

2 stretches are compositionally biased toward basic residues: residues 1–11 (MAPVRKSRSVN) and 27–36 (SKKNKLRKKL). The interval 1-37 (MAPVRKSRSVNKRFTNETSPRKDAGKSKKNKLRKKLS) is disordered. One can recognise an SANT domain in the interval 39-93 (KLGPQWTRLELERFYDAYRKHGQEWRRVAAAIRNSRSVDMVEALFNMNRAYLSLP). 6 disordered regions span residues 114–158 (EGSG…IGSP), 170–210 (ANGT…RKQF), 225–293 (TDAS…KDTT), 323–375 (AECN…TSGA), 397–605 (SELS…SSRS), and 948–981 (SIEHHHNPSPSNGSEPVANNDLNSQDGSEKNAQM). Residues 120–130 (GEGHDASEVPR) show a composition bias toward basic and acidic residues. Positions 131-140 (KQQKRKRAKP) are enriched in basic residues. A compositionally biased stretch (basic and acidic residues) spans 279 to 293 (ESSRERKLDSDKDTT). A compositionally biased stretch (acidic residues) spans 323–332 (AECNDSDDNG). Basic and acidic residues-rich tracts occupy residues 350–372 (AAIEASREKYSPRSPKKRDDKHT) and 403–417 (LKEERTEYDMDEKSS). The span at 560–574 (KQVSDSGPTSLSQKP) shows a compositional bias: polar residues. Residues 586–597 (LQEKAKSSETTH) are compositionally biased toward basic and acidic residues. Residues 967 to 981 (NDLNSQDGSEKNAQM) show a composition bias toward polar residues.

In terms of assembly, interacts with SNL1 (via PAH3). As to expression, expressed ubiquitously in vegetative and reproductive tissues.

It localises to the nucleus. In Arabidopsis thaliana (Mouse-ear cress), this protein is Protein ALWAYS EARLY 2 (ALY2).